The sequence spans 794 residues: ALG-2 interacting protein X (794 aa).

Residues 1–385 (MLSIERKRTE…DNIEFHNQSA (385 aa)) enclose the BRO1 domain. 2 coiled-coil regions span residues 499–568 (SFIR…LCKK) and 600–655 (LNES…NLDE). The disordered stretch occupies residues 695–794 (GVNPHSPLTS…PPYNSNNKHY (100 aa)). Residues 698–712 (PHSPLTSPSPSLQSP) show a composition bias toward low complexity. Residues 713–722 (VNNYPNQFSS) show a composition bias toward polar residues. Low complexity-rich tracts occupy residues 723–742 (PQYHTSPNQQQQQQQQYVPS) and 749–764 (YSYNPQPYQPPQQFGG). A compositionally biased stretch (pro residues) spans 765–787 (PLPPPQSFSAPPPPQSFTAPPPY).

As to quaternary structure, self-associates; the interaction is calcium-independent Interacts with pefa; the interaction is calcium-dependent. Interacts with pefb; the interaction is calcium-dependent.

The protein localises to the cytoplasm. Its subcellular location is the cytoplasmic vesicle membrane. It is found in the endosome. Functionally, unknown. Required for development but not for cell death. The polypeptide is ALG-2 interacting protein X (alxA) (Dictyostelium discoideum (Social amoeba)).